Here is a 354-residue protein sequence, read N- to C-terminus: Putative cinnamyl alcohol dehydrogenase 4 (354 aa).

Residues Cys47, His69, Glu70, Cys100, Cys103, Cys106, Cys114, and Cys163 each coordinate Zn(2+). NADP(+) contacts are provided by residues Thr167, 188–193 (GLGGLG), 211–216 (STSESK), Thr251, and 297–299 (SVT).

It belongs to the zinc-containing alcohol dehydrogenase family. In terms of assembly, homodimer. Zn(2+) is required as a cofactor.

It catalyses the reaction (E)-cinnamyl alcohol + NADP(+) = (E)-cinnamaldehyde + NADPH + H(+). The enzyme catalyses (E)-coniferol + NADP(+) = (E)-coniferaldehyde + NADPH + H(+). The catalysed reaction is (E)-sinapyl alcohol + NADP(+) = (E)-sinapaldehyde + NADPH + H(+). It carries out the reaction (E)-4-coumaroyl alcohol + NADP(+) = (E)-4-coumaraldehyde + NADPH + H(+). It catalyses the reaction (E)-caffeyl alcohol + NADP(+) = (E)-caffeyl aldehyde + NADPH + H(+). Its pathway is aromatic compound metabolism; phenylpropanoid biosynthesis. Involved in lignin biosynthesis. Catalyzes the final step specific for the production of lignin monomers. Catalyzes the NADPH-dependent reduction of coniferaldehyde, 5-hydroxyconiferaldehyde, sinapaldehyde, 4-coumaraldehyde and caffeyl aldehyde to their respective alcohols. This chain is Putative cinnamyl alcohol dehydrogenase 4, found in Oryza sativa subsp. japonica (Rice).